Here is a 281-residue protein sequence, read N- to C-terminus: UPF0162 protein XF_1494 (281 aa).

2 TPR repeats span residues 193–226 (VRIL…VPNQ) and 227–260 (PEAL…YPST).

The protein belongs to the UPF0162 family.

The chain is UPF0162 protein XF_1494 from Xylella fastidiosa (strain 9a5c).